Reading from the N-terminus, the 353-residue chain is MTVNLTELDAHEQPSDQMRAIWKSYSRADKEELLLNGAIDDLEKPEKAAEFVVAGTVPAATLTKGFAFLGSGFDAAASDAPIYYHPLLPGLLIFPSIVPLEVQKTLLSKLIHRDLSVPAHQTNMHLHYELPYVERKPTDGEGEPEDCRQSFFSHSPDSPVRFQPKDPDVHKPLSMKQVMDRRLHWVTLGGQYDWTNRVYPEEEPPKFPPDVAGFLETVFPDTIAQAAIVNFYTPGDTMMMHRDVSEETDKGLVSLSLGCDGLFMIAPSDIGKMSEEERPEDVKKQYLLLRLRSGDAIYMIKESRYAWHGVPKVLKGTCPEALEDWPAEDGRFEEWRGWMKNKRINLNVRQMRE.

Residues isoleucine 223–arginine 352 form the Fe2OG dioxygenase domain. The Fe cation site is built by histidine 241, aspartate 243, and histidine 308. Residue arginine 343 participates in 2-oxoglutarate binding.

The protein belongs to the alkB family. Fe(2+) is required as a cofactor.

It localises to the cytoplasm. It is found in the P-body. It carries out the reaction an N(6)-methyladenosine in mRNA + 2-oxoglutarate + O2 = an adenosine in mRNA + formaldehyde + succinate + CO2. Its function is as follows. RNA demethylase that regulates the stability of mRNAs through an m(6)A-dependent manner. M6A is a modification present at internal sites of mRNAs and some non-coding RNAs and plays a role in mRNA stability and processing. Plays a role in pathogenicity towards plant host. This Pyricularia oryzae (strain 70-15 / ATCC MYA-4617 / FGSC 8958) (Rice blast fungus) protein is N6-methyladenosine RNA demethylase ALKB1.